A 423-amino-acid polypeptide reads, in one-letter code: UPF0229 protein PFLU_5583 (423 aa).

Residues 64 to 109 form a disordered region; that stretch reads LHHGRGGKQTVVHPGNKEFTTGEHIQRPQGGGGGKGPGKAGNSGEG. A compositionally biased stretch (gly residues) spans 92–107; sequence QGGGGGKGPGKAGNSG.

Belongs to the UPF0229 family.

In Pseudomonas fluorescens (strain SBW25), this protein is UPF0229 protein PFLU_5583.